The primary structure comprises 353 residues: Uroporphyrinogen decarboxylase (353 aa).

Residues R27 to R31, F46, D76, Y152, S207, and H321 contribute to the substrate site.

Belongs to the uroporphyrinogen decarboxylase family. In terms of assembly, homodimer.

The protein resides in the cytoplasm. It carries out the reaction uroporphyrinogen III + 4 H(+) = coproporphyrinogen III + 4 CO2. Its pathway is porphyrin-containing compound metabolism; protoporphyrin-IX biosynthesis; coproporphyrinogen-III from 5-aminolevulinate: step 4/4. Catalyzes the decarboxylation of four acetate groups of uroporphyrinogen-III to yield coproporphyrinogen-III. The protein is Uroporphyrinogen decarboxylase of Listeria monocytogenes serotype 4b (strain CLIP80459).